Here is a 539-residue protein sequence, read N- to C-terminus: Chaperonin GroEL (539 aa).

Residues T30–P33, K51, D87–T91, G415, N479–A481, and D495 contribute to the ATP site.

This sequence belongs to the chaperonin (HSP60) family. As to quaternary structure, forms a cylinder of 14 subunits composed of two heptameric rings stacked back-to-back. Interacts with the co-chaperonin GroES.

The protein localises to the cytoplasm. It carries out the reaction ATP + H2O + a folded polypeptide = ADP + phosphate + an unfolded polypeptide.. Functionally, together with its co-chaperonin GroES, plays an essential role in assisting protein folding. The GroEL-GroES system forms a nano-cage that allows encapsulation of the non-native substrate proteins and provides a physical environment optimized to promote and accelerate protein folding. The chain is Chaperonin GroEL from Enterobacter asburiae.